The primary structure comprises 549 residues: Chaperonin GroEL 2 (549 aa).

Residues 30–33 (TLGP), K51, 87–91 (DGTTT), G415, 479–481 (NAA), and D495 contribute to the ATP site.

Belongs to the chaperonin (HSP60) family. In terms of assembly, forms a cylinder of 14 subunits composed of two heptameric rings stacked back-to-back. Interacts with the co-chaperonin GroES.

It is found in the cytoplasm. The catalysed reaction is ATP + H2O + a folded polypeptide = ADP + phosphate + an unfolded polypeptide.. Functionally, together with its co-chaperonin GroES, plays an essential role in assisting protein folding. The GroEL-GroES system forms a nano-cage that allows encapsulation of the non-native substrate proteins and provides a physical environment optimized to promote and accelerate protein folding. In Polaromonas naphthalenivorans (strain CJ2), this protein is Chaperonin GroEL 2.